A 155-amino-acid polypeptide reads, in one-letter code: MLKPDSLRRALTDAVTVLKTNPDMLRIFVDNGSIASTLAASLSFEKRYTLNVIVTDFTGDFDLLIVPVLAWLRENQPDIMTTDEGQKKGFTFYADINNDSSFDISISLMLTERTLVSEVDGALHVKNISEPPPPEPVTRPMELYINGELVSKWDE.

The protein to phage T4 tail protein GP15.

Functionally, it is proposed that R and S are tail completion proteins that are essential for stable head joining. In Enterobacteriaceae (Bacteriophage P2), this protein is Tail completion protein R (R).